A 196-amino-acid chain; its full sequence is Heat shock protein beta-8 (196 aa).

A disordered region spans residues 1 to 34; the sequence is MADGQMPFPCHYTSRRRRDPFRDSPLSSRLLDDG. Residues 23–34 show a composition bias toward low complexity; sequence DSPLSSRLLDDG. A phosphoserine mark is found at Ser24 and Ser57. Thr63 carries the post-translational modification Phosphothreonine. Asymmetric dimethylarginine occurs at positions 71 and 78. The sHSP domain maps to 74–185; it reads TAMTRFGVPA…PFGESSFNNE (112 aa). Ser87 bears the Phosphoserine mark. The segment at 176–196 is disordered; that stretch reads PFGESSFNNELPQDGQEVTCT. Residues 178–196 are compositionally biased toward polar residues; the sequence is GESSFNNELPQDGQEVTCT.

The protein belongs to the small heat shock protein (HSP20) family. In terms of assembly, monomer. Forms a ternary complex with BAG3 and HSPA1A. Component of the chaperone-assisted selective autophagy (CASA) complex consisting of BAG3, HSPA8/HSC70, HSPB8 and STUB1/CHIP. Interacts with HSPB1. Interacts with DNAJB6. Interacts with BAG3. Post-translationally, phosphorylated.

The protein localises to the cytoplasm. The protein resides in the nucleus. Functionally, involved in the chaperone-assisted selective autophagy (CASA), a crucial process for protein quality control, particularly in mechanical strained cells and tissues such as muscle. Displays temperature-dependent chaperone activity. The polypeptide is Heat shock protein beta-8 (HSPB8) (Bos taurus (Bovine)).